The primary structure comprises 983 residues: MISNKRKEIDTINEHHEKNNDDSDGIDNGLLTYKKFKKDFESGSTNYRELQIIAKSLGLASNGKKQLVYNRIEGYFLSKKVKNNLTNNETNRQVEKKKEQQQPQPQEKQYILTFKDVEPVEIYFWKIFRNIVIFKHIFSNFKSKQYSYYDLIGCDEILLNGKSNSMEIIIDNIKSYNHQIIRNESNIIDIINKFKKNDEKTRSFYNLLFSRYSSTSTSPSTQLPSTIQFDGNIDIWIQRMIENVNYTALDQFIKFFKIDSEVIKKAIKIHIDPSFFGNTTYDKLKIYNYLKSINSIPTSHTLLSTISINFSTLLSFDNKFKKLIKSYKRLIESTNLQEQQEQLEKQGIIKIHPNKKYYEKLNQKILELNEIQTSQFTNYQLNSTIKKLLNHTTPTSTSTSTSTSTSTYTSTSTSTSTSLKTTNLTIISTESNYSSTNNNNNNINLKEIIKKYYKSIYLFIYFTINSANKTIFRKPLLYYLYFKKERVDKMYEHVIKKWNGSNFDHKLFFQRIFKDIKIEKNEKFELISNVLNNKYVKTFKLKDLHIFFEAVFSSNDIELIDYFLKILKQQQLNQTPETTTFPVIGSLISDYCHFIDKKEILDFYFQNYRDECLLFNDQNQTWKRIQLGLIEHYEYLTGSIGNRCNFDIFRWFDSSKFLDRLNRTIAKPLLYYFDFRGTINFNFNFIFKGLIDSNTEDSKENSIIHFLSNAQLKHPLYVSPILESSFNRYKSKMLTFIKFLFNNISKESIETKLKVINLKTDNKNFEEINSEIVLTTTLTTTTTTTTTTTTGTTATATNLLSAKKGEDVGFFIIGQTESFNFTVSIRILLVCLYRLDRVDDIIYLFDKLPEVLFNPDYFSIFTKEHCLYGISSSYYLELFINYFIENLNNNTINYLYNCLCIASKKGYTQIFKNIISSDHNSKYLLKIRTKSNQSSLFSSKLLNDIVVKSINSLNFELSNLLIDFIDFSEKDKNTLKMKIIKSK.

Positions Met1–Asp21 are enriched in basic and acidic residues. The interval Met1–Ile26 is disordered. An SAP domain is found at Ser42–Phe76. The disordered stretch occupies residues His391–Thr413. The segment covering Thr392 to Thr413 has biased composition (low complexity).

The protein belongs to the UPF0746 family.

The polypeptide is UPF0746 protein DDB_G0280809 (Dictyostelium discoideum (Social amoeba)).